Here is a 347-residue protein sequence, read N- to C-terminus: NADH-ubiquinone oxidoreductase chain 2 (347 aa).

Helical transmembrane passes span 1-21, 25-45, 59-79, 96-116, 148-168, 178-198, 200-220, 237-257, 274-294, and 326-346; these read MNPIIFFMIMLTIILGTTIVM, HWLTVWMGFEMNMLAIIPMLM, YFLTQATASMLLLLAITINLM, IILTIALAMKLGLAPFHFWVP, IINLDLLLMMGLLSVMIGGWG, IMAYSSIAHMGWMVTILIYNP, LTMLNLTIYIMMTLTMFMLLI, MPLITTMMLTTLLSMGGLPPL, NSIILPTFMAITALLNLYFYM, and LSPLMVISTMTLPLTPMMMIL.

Belongs to the complex I subunit 2 family. As to quaternary structure, core subunit of respiratory chain NADH dehydrogenase (Complex I) which is composed of 45 different subunits. Interacts with TMEM242.

The protein localises to the mitochondrion inner membrane. The catalysed reaction is a ubiquinone + NADH + 5 H(+)(in) = a ubiquinol + NAD(+) + 4 H(+)(out). In terms of biological role, core subunit of the mitochondrial membrane respiratory chain NADH dehydrogenase (Complex I) which catalyzes electron transfer from NADH through the respiratory chain, using ubiquinone as an electron acceptor. Essential for the catalytic activity and assembly of complex I. The sequence is that of NADH-ubiquinone oxidoreductase chain 2 from Gardnerycteris crenulata (Striped hairy-nosed bat).